A 696-amino-acid polypeptide reads, in one-letter code: Translation initiation factor IF-2 (696 aa).

Residues 187–361 (ERPPVVTVMG…EMQEIKGIPD (175 aa)) form the tr-type G domain. The G1 stretch occupies residues 196 to 203 (GHVDHGKT). 196 to 203 (GHVDHGKT) contacts GTP. Positions 221 to 225 (GITQS) are G2. The segment at 242-245 (DTPG) is G3. Residues 242-246 (DTPGH) and 296-299 (NKID) each bind GTP. A G4 region spans residues 296–299 (NKID). The tract at residues 333 to 335 (SAK) is G5.

This sequence belongs to the TRAFAC class translation factor GTPase superfamily. Classic translation factor GTPase family. IF-2 subfamily.

It localises to the cytoplasm. Its function is as follows. One of the essential components for the initiation of protein synthesis. Protects formylmethionyl-tRNA from spontaneous hydrolysis and promotes its binding to the 30S ribosomal subunits. Also involved in the hydrolysis of GTP during the formation of the 70S ribosomal complex. The polypeptide is Translation initiation factor IF-2 (Thermosipho africanus (strain TCF52B)).